Reading from the N-terminus, the 274-residue chain is 2,3,4,5-tetrahydropyridine-2,6-dicarboxylate N-succinyltransferase (274 aa).

Substrate contacts are provided by Arg106 and Asp143.

It belongs to the transferase hexapeptide repeat family. Homotrimer.

The protein localises to the cytoplasm. The enzyme catalyses (S)-2,3,4,5-tetrahydrodipicolinate + succinyl-CoA + H2O = (S)-2-succinylamino-6-oxoheptanedioate + CoA. Its pathway is amino-acid biosynthesis; L-lysine biosynthesis via DAP pathway; LL-2,6-diaminopimelate from (S)-tetrahydrodipicolinate (succinylase route): step 1/3. This is 2,3,4,5-tetrahydropyridine-2,6-dicarboxylate N-succinyltransferase from Acidovorax ebreus (strain TPSY) (Diaphorobacter sp. (strain TPSY)).